We begin with the raw amino-acid sequence, 134 residues long: Small ribosomal subunit protein uS9c (134 aa).

It belongs to the universal ribosomal protein uS9 family.

The protein resides in the plastid. It localises to the chloroplast. The sequence is that of Small ribosomal subunit protein uS9c (rps9) from Guillardia theta (Cryptophyte).